A 169-amino-acid chain; its full sequence is Fumarase E (169 aa).

This sequence belongs to the MtlR/FumE family. Homodimer.

The catalysed reaction is (S)-malate = fumarate + H2O. In terms of biological role, in vitro catalyzes the addition of water to fumarate, forming malate. Cannot catalyze the reverse reaction. Cannot use the cis-isomer maleate as substrate. The chain is Fumarase E from Shigella flexneri.